Reading from the N-terminus, the 184-residue chain is MKLLLPLLLLLCLELTLVCIHAEESSSMERNFNVEQISGYWFSIAEASYEREKIEEHGSMRAFVENITVLENSLVFKFHLIVNEECTEMTAIGEQTEKAGIYYMNYDGFNTFSILKTDYDNYIMIHLINKKDGKTFQLMELYGREPDLSLDIKEKFAKLCEEHGIIRENIIDLTNVNRCLEARE.

Residues 1–22 (MKLLLPLLLLLCLELTLVCIHA) form the signal peptide. N66 carries an N-linked (GlcNAc...) asparagine glycan. C86 and C179 are disulfide-bonded.

Belongs to the calycin superfamily. Lipocalin family. Post-translationally, glycosylated. In terms of tissue distribution, abundant in the urine of adult male mice but absent from that of females.

Its subcellular location is the secreted. In terms of biological role, binds pheromones that are released from drying urine of males. These pheromones affect the sexual behavior of females. In Mus musculus (Mouse), this protein is Major urinary protein 3 (Mup3).